Reading from the N-terminus, the 817-residue chain is Alpha-bisabolene synthase (817 aa).

Residues D566, D570, D713, T717, and E721 each contribute to the Mg(2+) site. A DDXXD motif motif is present at residues 566-570 (DDMYD).

It belongs to the terpene synthase family. Tpsd subfamily. The cofactor is Mg(2+). Mn(2+) serves as cofactor. It depends on K(+) as a cofactor.

It is found in the cytoplasm. The enzyme catalyses (2E,6E)-farnesyl diphosphate = (E,R)-alpha-bisabolene + diphosphate. It participates in terpene metabolism; oleoresin biosynthesis. Its function is as follows. Converts farnesyl diphosphate to alpha-bisabolene. Involved in defensive oleoresin formation in conifers in response to insect attack or other injury. Involved in sesquiterpene (C15) olefins biosynthesis. In Abies grandis (Grand fir), this protein is Alpha-bisabolene synthase (ag1).